The sequence spans 447 residues: Acyl-CoA (8-3)-desaturase (447 aa).

Met-1 carries the post-translational modification N-acetylmethionine. Residues Met-1 to Arg-124 lie on the Cytoplasmic side of the membrane. A Cytochrome b5 heme-binding domain is found at Thr-19–Ala-97. A helical membrane pass occupies residues Met-125–Leu-145. Residues Asp-146–Leu-160 are Lumenal-facing. Residues Val-161–Leu-180 traverse the membrane as a helical segment. The Cytoplasmic portion of the chain corresponds to Gln-181 to Tyr-268. A Histidine box-1 motif is present at residues His-182–His-186. The short motif at His-219–His-223 is the Histidine box-2 element. A helical membrane pass occupies residues Phe-269–Phe-289. At Val-290–Arg-308 the chain is on the lumenal side. A helical transmembrane segment spans residues Ile-309–Val-329. Topologically, residues Arg-330–Gln-447 are cytoplasmic. The short motif at Gln-385–His-389 is the Histidine box-3 element.

This sequence belongs to the fatty acid desaturase type 1 family. In terms of tissue distribution, highly expressed in the adrenal gland, liver, brain, and testis, tissues where lipogenesis and steroidogenesis are active. Expressed in colonic mucosa.

It localises to the endoplasmic reticulum membrane. Its subcellular location is the mitochondrion. The catalysed reaction is (8Z,11Z,14Z)-eicosatrienoyl-CoA + 2 Fe(II)-[cytochrome b5] + O2 + 2 H(+) = (5Z,8Z,11Z,14Z)-eicosatetraenoyl-CoA + 2 Fe(III)-[cytochrome b5] + 2 H2O. The enzyme catalyses (8Z,11Z,14Z,17Z)-eicosatetraenoyl-CoA + 2 Fe(II)-[cytochrome b5] + O2 + 2 H(+) = (5Z,8Z,11Z,14Z,17Z)-eicosapentaenoyl-CoA + 2 Fe(III)-[cytochrome b5] + 2 H2O. It catalyses the reaction (11E)-octadecenoyl-CoA + 2 Fe(II)-[cytochrome b5] + O2 + 2 H(+) = (5Z,11E)-octadecadienoyl-CoA + 2 Fe(III)-[cytochrome b5] + 2 H2O. The protein operates within lipid metabolism; polyunsaturated fatty acid biosynthesis. Acts as a front-end fatty acyl-coenzyme A (CoA) desaturase that introduces a cis double bond at carbon 5 located between a preexisting double bond and the carboxyl end of the fatty acyl chain. Involved in biosynthesis of highly unsaturated fatty acids (HUFA) from the essential polyunsaturated fatty acids (PUFA) linoleic acid (LA) (18:2n-6) and alpha-linolenic acid (ALA) (18:3n-3) precursors. Specifically, desaturates dihomo-gamma-linoleoate (DGLA) (20:3n-6) and eicosatetraenoate (ETA) (20:4n-3) to generate arachidonate (AA) (20:4n-6) and eicosapentaenoate (EPA) (20:5n-3), respectively. As a rate limiting enzyme for DGLA (20:3n-6) and AA (20:4n-6)-derived eicosanoid biosynthesis, controls the metabolism of inflammatory lipids like prostaglandin E2, critical for efficient acute inflammatory response and maintenance of epithelium homeostasis. Contributes to membrane phospholipid biosynthesis by providing AA (20:4n-6) as a major acyl chain esterified into phospholipids. In particular, regulates phosphatidylinositol-4,5-bisphosphate levels, modulating inflammatory cytokine production in T-cells. Also desaturates (11E)-octadecenoate (trans-vaccenoate)(18:1n-9), a metabolite in the biohydrogenation pathway of LA (18:2n-6). The sequence is that of Acyl-CoA (8-3)-desaturase from Mus musculus (Mouse).